The primary structure comprises 1975 residues: Golgi-specific brefeldin A-resistance guanine nucleotide exchange factor 1 homolog (1975 aa).

2 disordered regions span residues 216 to 243 (NPTEKRQKRKKKRQLSVHIETKAKEPEN) and 299 to 352 (ISAG…EEKM). Residues 221–230 (RQKRKKKRQL) show a composition bias toward basic residues. Residues 624 to 812 (QIIEQKKRKR…ADMYQAIKTE (189 aa)) enclose the SEC7 domain. Positions 1264–1277 (QSLRVGGDQQQQRM) are enriched in polar residues. 5 disordered regions span residues 1264–1318 (QSLR…DLES), 1447–1473 (DEKAVKKHHHHHHGHKKKELCTDVTED), 1699–1751 (IKDT…ATAQ), 1788–1854 (VHSG…QYAY), and 1877–1975 (YANQ…QEKP). The segment covering 1291-1309 (GAHEERAYTSEGEERRRGG) has biased composition (basic and acidic residues). Residues 1451 to 1464 (VKKHHHHHHGHKKK) show a composition bias toward basic residues. Low complexity predominate over residues 1734–1751 (SNSTAATSTSDPSIATAQ). Positions 1797 to 1808 (GSPPQTEPPASS) are enriched in pro residues. Composition is skewed to low complexity over residues 1820 to 1854 (YEQYRQQQAAAAQQYQQYNQNYPQQQQQQQQQYAY) and 1877 to 1894 (YANQYQHYQQQQQQQQQH). The span at 1895-1909 (PVNPTSPSVHGQYSV) shows a compositional bias: polar residues. A compositionally biased stretch (low complexity) spans 1938 to 1957 (TPPQNNAPALAPSAPTTTSA).

The protein resides in the golgi apparatus. It is found in the cis-Golgi network. The protein localises to the endoplasmic reticulum-Golgi intermediate compartment. Its function is as follows. Guanine-nucleotide exchange factor (GEF) for members of the Arf family of small GTPases involved in trafficking in the early secretory pathway; its GEF activity initiates the coating of nascent vesicles via the localized generation of activated ARFs through replacement of GDP with GTP. Also, plays a role in receptor-mediated endocytosis in oocytes and endosomal trafficking. Involved in vesicle retrograde transport from the ERGIC and cis-Golgi compartments to the endoplasmic reticulum (ER). Plays a role in maintaining mitochondrial morphology, network organization and function. May be required for the basolateral cell membrane localization of the serine threonine protein kinase sgk-1 in intestinal cells. The protein is Golgi-specific brefeldin A-resistance guanine nucleotide exchange factor 1 homolog of Caenorhabditis elegans.